Reading from the N-terminus, the 627-residue chain is Plastin-3 (627 aa).

EF-hand domains are found at residues Glu-8–Pro-43 and Lys-48–Gly-83. The Ca(2+) site is built by Asp-21, Asn-23, Asn-25, Glu-32, Asp-61, Asn-63, Asp-65, Met-67, and Glu-72. Actin-binding stretches follow at residues Thr-105–Lys-378 and Pro-379–Met-624. 4 Calponin-homology (CH) domains span residues Glu-119–Leu-235, Leu-263–Pro-374, Thr-393–Thr-503, and Lys-515–Met-624.

The protein resides in the cytoplasm. In terms of biological role, actin-bundling protein. The sequence is that of Plastin-3 (pls3) from Danio rerio (Zebrafish).